Reading from the N-terminus, the 474-residue chain is Aspartyl/glutamyl-tRNA(Asn/Gln) amidotransferase subunit B (474 aa).

This sequence belongs to the GatB/GatE family. GatB subfamily. As to quaternary structure, heterotrimer of A, B and C subunits.

The catalysed reaction is L-glutamyl-tRNA(Gln) + L-glutamine + ATP + H2O = L-glutaminyl-tRNA(Gln) + L-glutamate + ADP + phosphate + H(+). The enzyme catalyses L-aspartyl-tRNA(Asn) + L-glutamine + ATP + H2O = L-asparaginyl-tRNA(Asn) + L-glutamate + ADP + phosphate + 2 H(+). In terms of biological role, allows the formation of correctly charged Asn-tRNA(Asn) or Gln-tRNA(Gln) through the transamidation of misacylated Asp-tRNA(Asn) or Glu-tRNA(Gln) in organisms which lack either or both of asparaginyl-tRNA or glutaminyl-tRNA synthetases. The reaction takes place in the presence of glutamine and ATP through an activated phospho-Asp-tRNA(Asn) or phospho-Glu-tRNA(Gln). The polypeptide is Aspartyl/glutamyl-tRNA(Asn/Gln) amidotransferase subunit B (Wolbachia sp. subsp. Brugia malayi (strain TRS)).